A 264-amino-acid polypeptide reads, in one-letter code: MSITLSTLLDLKKKSEKFAVMTAYDATFAYEMDQAGVEVILVGDSLGMVLQGHDSTIPVRLEDMVYHTASVRRGARNAFIIADMPFMSYGTPDQAMAGAKQLMQAGAHMVKLEGGAWLCDAIAHLSRQGVPICAHLGLTPQSVNKFGGYKVQGKEASQAQLMLDDAKALEQAGADILLLECVPTKLAKQLTEEACAPVVGIGAGPYTDGQVLVMHDLLGVGAGKKPKFVKNFLAGSDSIQAAFKGYVEAVKSGAFPAEEHSFNI.

Asp44 and Asp83 together coordinate Mg(2+). 3-methyl-2-oxobutanoate-binding positions include 44 to 45 (DS), Asp83, and Lys111. Position 113 (Glu113) interacts with Mg(2+). Glu180 (proton acceptor) is an active-site residue.

It belongs to the PanB family. In terms of assembly, homodecamer; pentamer of dimers. The cofactor is Mg(2+).

Its subcellular location is the cytoplasm. The catalysed reaction is 3-methyl-2-oxobutanoate + (6R)-5,10-methylene-5,6,7,8-tetrahydrofolate + H2O = 2-dehydropantoate + (6S)-5,6,7,8-tetrahydrofolate. Its pathway is cofactor biosynthesis; (R)-pantothenate biosynthesis; (R)-pantoate from 3-methyl-2-oxobutanoate: step 1/2. In terms of biological role, catalyzes the reversible reaction in which hydroxymethyl group from 5,10-methylenetetrahydrofolate is transferred onto alpha-ketoisovalerate to form ketopantoate. The polypeptide is 3-methyl-2-oxobutanoate hydroxymethyltransferase 2 (Hahella chejuensis (strain KCTC 2396)).